Here is a 133-residue protein sequence, read N- to C-terminus: ATP synthase epsilon chain, chloroplastic (133 aa).

Belongs to the ATPase epsilon chain family. In terms of assembly, F-type ATPases have 2 components, CF(1) - the catalytic core - and CF(0) - the membrane proton channel. CF(1) has five subunits: alpha(3), beta(3), gamma(1), delta(1), epsilon(1). CF(0) has three main subunits: a, b and c.

It localises to the plastid. The protein resides in the chloroplast thylakoid membrane. Functionally, produces ATP from ADP in the presence of a proton gradient across the membrane. In Piper cenocladum (Ant piper), this protein is ATP synthase epsilon chain, chloroplastic.